The following is a 711-amino-acid chain: Polyribonucleotide nucleotidyltransferase (711 aa).

2 residues coordinate Mg(2+): Asp-486 and Asp-492. A KH domain is found at 553-612 (PRIHTIKINPDKIKDVIGKGGSVIRALTEETGTTIEIEDDGTVKIAATDGEKAKNAIRRI). In terms of domain architecture, S1 motif spans 622–690 (GRVYNGKVTR…RQGRIRLSIK (69 aa)). The segment at 689 to 711 (IKEATEQSQPAAAPEAPAAEQGE) is disordered. The span at 694–711 (EQSQPAAAPEAPAAEQGE) shows a compositional bias: low complexity.

The protein belongs to the polyribonucleotide nucleotidyltransferase family. In terms of assembly, component of the RNA degradosome, which is a multiprotein complex involved in RNA processing and mRNA degradation. Requires Mg(2+) as cofactor.

The protein resides in the cytoplasm. The catalysed reaction is RNA(n+1) + phosphate = RNA(n) + a ribonucleoside 5'-diphosphate. Functionally, involved in mRNA degradation. Catalyzes the phosphorolysis of single-stranded polyribonucleotides processively in the 3'- to 5'-direction. In Escherichia fergusonii (strain ATCC 35469 / DSM 13698 / CCUG 18766 / IAM 14443 / JCM 21226 / LMG 7866 / NBRC 102419 / NCTC 12128 / CDC 0568-73), this protein is Polyribonucleotide nucleotidyltransferase.